We begin with the raw amino-acid sequence, 434 residues long: MSFNTIIDWNSCTAKQQRQLLMRPAISASESITRTVNDILDSVKARGDDALREYSAKFDKTTVTALKVSAEEIAAASERLSDELKQAMAVAVKNIETFHTAQKLPPVDVETQPGVRCQQVTRPVASVGLYIPGGSAPLFSTVLMLATPARIAGCKKVVLCSPPPIADEILYAAQLCGVQDVFNVGGAQAIAALAFGTESVPKVDKIFGPGNAFVTEAKRQVSQRLDGAAIDMPAGPSEVLVIADSGATPDFVASDLLSQAEHGPDSQVILLTPDADMAHQVAEAVERQLAELPRAETARQALNASRLIVTKDLAQCVEISNQYGPEHLIIQTRNARELVDGITSAGSVFLGDWSPESAGDYASGTNHVLPTYGYTATCSSLGLADFQKRMTVQELSKVGFSALASTIETLAAAERLTAHKNAVTLRVNALKEQA.

NAD(+) contacts are provided by Y130, Q188, and N211. 3 residues coordinate substrate: S237, Q259, and H262. Q259 and H262 together coordinate Zn(2+). Active-site proton acceptor residues include E326 and H327. Substrate-binding residues include H327, D360, E414, and H419. D360 lines the Zn(2+) pocket. H419 provides a ligand contact to Zn(2+).

Belongs to the histidinol dehydrogenase family. Homodimer. Zn(2+) is required as a cofactor.

The enzyme catalyses L-histidinol + 2 NAD(+) + H2O = L-histidine + 2 NADH + 3 H(+). The protein operates within amino-acid biosynthesis; L-histidine biosynthesis; L-histidine from 5-phospho-alpha-D-ribose 1-diphosphate: step 9/9. Its function is as follows. Catalyzes the sequential NAD-dependent oxidations of L-histidinol to L-histidinaldehyde and then to L-histidine. This chain is Histidinol dehydrogenase, found in Escherichia coli O157:H7.